A 327-amino-acid chain; its full sequence is Putative HTH-type transcriptional regulatory protein MmarC6_0210 (327 aa).

The HTH cro/C1-type domain maps to Leu-128–Ile-183. The H-T-H motif DNA-binding region spans Val-139–Gln-158.

The sequence is that of Putative HTH-type transcriptional regulatory protein MmarC6_0210 from Methanococcus maripaludis (strain C6 / ATCC BAA-1332).